Here is a 289-residue protein sequence, read N- to C-terminus: Phosphatidylserine decarboxylase proenzyme (289 aa).

Catalysis depends on charge relay system; for autoendoproteolytic cleavage activity residues Asp-92, His-149, and Ser-254. Ser-254 acts as the Schiff-base intermediate with substrate; via pyruvic acid; for decarboxylase activity in catalysis. Pyruvic acid (Ser); by autocatalysis is present on Ser-254.

This sequence belongs to the phosphatidylserine decarboxylase family. PSD-B subfamily. Prokaryotic type I sub-subfamily. Heterodimer of a large membrane-associated beta subunit and a small pyruvoyl-containing alpha subunit. The cofactor is pyruvate. Is synthesized initially as an inactive proenzyme. Formation of the active enzyme involves a self-maturation process in which the active site pyruvoyl group is generated from an internal serine residue via an autocatalytic post-translational modification. Two non-identical subunits are generated from the proenzyme in this reaction, and the pyruvate is formed at the N-terminus of the alpha chain, which is derived from the carboxyl end of the proenzyme. The autoendoproteolytic cleavage occurs by a canonical serine protease mechanism, in which the side chain hydroxyl group of the serine supplies its oxygen atom to form the C-terminus of the beta chain, while the remainder of the serine residue undergoes an oxidative deamination to produce ammonia and the pyruvoyl prosthetic group on the alpha chain. During this reaction, the Ser that is part of the protease active site of the proenzyme becomes the pyruvoyl prosthetic group, which constitutes an essential element of the active site of the mature decarboxylase.

The protein resides in the cell membrane. It catalyses the reaction a 1,2-diacyl-sn-glycero-3-phospho-L-serine + H(+) = a 1,2-diacyl-sn-glycero-3-phosphoethanolamine + CO2. Its pathway is phospholipid metabolism; phosphatidylethanolamine biosynthesis; phosphatidylethanolamine from CDP-diacylglycerol: step 2/2. Its function is as follows. Catalyzes the formation of phosphatidylethanolamine (PtdEtn) from phosphatidylserine (PtdSer). This is Phosphatidylserine decarboxylase proenzyme from Pseudomonas paraeruginosa (strain DSM 24068 / PA7) (Pseudomonas aeruginosa (strain PA7)).